Here is a 165-residue protein sequence, read N- to C-terminus: Putative 1,2-phenylacetyl-CoA epoxidase, subunit D (165 aa).

In terms of assembly, monomer.

It functions in the pathway aromatic compound metabolism; phenylacetate degradation. Functionally, possible component of 1,2-phenylacetyl-CoA epoxidase multicomponent enzyme system which catalyzes the reduction of phenylacetyl-CoA (PA-CoA) to form 1,2-epoxyphenylacetyl-CoA. The subunit D may have a function related to the maturation of the monooxygenase complex, rather than direct involvement in catalysis. PaaD could assist either in maturation of PaaE or PaaA. The chain is Putative 1,2-phenylacetyl-CoA epoxidase, subunit D (paaD) from Escherichia coli (strain K12).